A 552-amino-acid polypeptide reads, in one-letter code: Protein FAM234A (552 aa).

Residues 1-22 (MLDHKDLEAEIHPLKNEERKSQ) are compositionally biased toward basic and acidic residues. The interval 1 to 40 (MLDHKDLEAEIHPLKNEERKSQENLGNPSKNEDNVKSAPP) is disordered. The Cytoplasmic portion of the chain corresponds to 1 to 49 (MLDHKDLEAEIHPLKNEERKSQENLGNPSKNEDNVKSAPPQSRLSRCRA). The residue at position 21 (serine 21) is a Phosphoserine. A helical; Signal-anchor for type II membrane protein transmembrane segment spans residues 50–70 (AAFFLSLFLCLFVVFVVSFVI). Topologically, residues 71–552 (PCPDRPASQR…FSRLRYQSEA (482 aa)) are extracellular. N-linked (GlcNAc...) asparagine glycosylation is found at asparagine 116, asparagine 314, asparagine 389, and asparagine 473.

The protein belongs to the FAM234 family.

It is found in the membrane. The protein is Protein FAM234A of Homo sapiens (Human).